We begin with the raw amino-acid sequence, 95 residues long: Protein TusB (95 aa).

It belongs to the DsrH/TusB family. In terms of assembly, heterohexamer, formed by a dimer of trimers. The hexameric TusBCD complex contains 2 copies each of TusB, TusC and TusD. The TusBCD complex interacts with TusE.

The protein localises to the cytoplasm. Part of a sulfur-relay system required for 2-thiolation of 5-methylaminomethyl-2-thiouridine (mnm(5)s(2)U) at tRNA wobble positions. In Escherichia coli O45:K1 (strain S88 / ExPEC), this protein is Protein TusB.